Consider the following 217-residue polypeptide: UPF0502 protein ETA_20480 (217 aa).

The segment at 169-188 is disordered; it reads GEVDESSRADGHHPDDHRGD. The span at 173–188 shows a compositional bias: basic and acidic residues; it reads ESSRADGHHPDDHRGD.

This sequence belongs to the UPF0502 family.

This chain is UPF0502 protein ETA_20480, found in Erwinia tasmaniensis (strain DSM 17950 / CFBP 7177 / CIP 109463 / NCPPB 4357 / Et1/99).